Here is an 899-residue protein sequence, read N- to C-terminus: Protein argonaute (899 aa).

Positions 107-129 (TQKPKRRGGRAGGMRGNRGGPST) are disordered. Positions 116–125 (RAGGMRGNRG) are enriched in gly residues. Positions 229–313 (SMCELLNENR…KQDDYCNSVL (85 aa)) constitute a PAZ domain. In terms of domain architecture, Piwi spans 555–878 (LVVVVIPGPK…LSKFCGEILG (324 aa)).

The protein belongs to the argonaute family. Ago subfamily. As to quaternary structure, interacts with miR2. Highly specific binding to the mRNA m7G-cap. May be a component of the RNA-induced silencing complex (RISC), a sequence-specific, multicomponent nuclease that destroys or silences messenger RNAs homologous to the silencing trigger.

The protein localises to the cytoplasm. Plays an essential role in growth and, with Dicer, also involved in microRNA (miRNA)-mediated translational repression. The RNA interference pathway is implicated in antigenic variation having a role in regulation of variant-specific surface protein (VSP)-coding gene expression. Several VSP genes are transcribed but only transcripts encoding the VSP to be expressed accumulate. Antisense RNAs corresponding to the silenced VSP genes are detected. The sequence is that of Protein argonaute from Giardia intestinalis (strain ATCC 50581 / GS clone H7) (Giardia lamblia).